A 353-amino-acid chain; its full sequence is UPF0283 membrane protein YcjF (353 aa).

Transmembrane regions (helical) follow at residues methionine 70 to threonine 90, valine 100 to valine 120, and glutamate 213 to tryptophan 233.

It belongs to the UPF0283 family.

The protein resides in the cell inner membrane. The chain is UPF0283 membrane protein YcjF from Shigella sonnei (strain Ss046).